Here is a 114-residue protein sequence, read N- to C-terminus: Hydrogenase maturation factor HypA (114 aa).

Residue His-2 participates in Ni(2+) binding. Zn(2+) is bound by residues Cys-73, Cys-76, Cys-90, and Cys-93.

This sequence belongs to the HypA/HybF family.

In terms of biological role, involved in the maturation of [NiFe] hydrogenases. Required for nickel insertion into the metal center of the hydrogenase. The protein is Hydrogenase maturation factor HypA of Klebsiella pneumoniae (strain 342).